We begin with the raw amino-acid sequence, 935 residues long: Inter-alpha-trypsin inhibitor heavy chain H2 (935 aa).

A signal peptide spans 1–18 (MKGLTCFLLCFLLSEAQG). Positions 19–53 (FEIPTNGLSEFAEYGDLAELALGKFHVVPGNRRSQ) are excised as a propeptide. Positions 45 to 174 (VVPGNRRSQE…KVQFELHYQE (130 aa)) constitute a VIT domain. A glycan (N-linked (GlcNAc...) asparagine) is linked at Asn107. Glu271 carries the 4-carboxyglutamate modification. Residues 297–457 (PKNILFVIDV…YDFLKRLSND (161 aa)) enclose the VWFA domain. N-linked (GlcNAc...) asparagine glycosylation is present at Asn434. The residue at position 455 (Ser455) is a Phosphoserine. Position 691 is an aspartate 1-(chondroitin 4-sulfate)-ester (Asp691). A propeptide spanning residues 692-935 (PHFIIYLPRS…PLLYSFLKRP (244 aa)) is cleaved from the precursor. Ser875 bears the Phosphoserine mark.

It belongs to the ITIH family. As to quaternary structure, I-alpha-I plasma protease inhibitors are assembled from one or two heavy chains (HC) and one light chain, bikunin. Inter-alpha-inhibitor (I-alpha-I) is composed of ITIH1/HC1, ITIH2/HC2 and bikunin. Heavy chains are linked to bikunin via chondroitin 4-sulfate esterified to the alpha-carboxyl of the C-terminal aspartate after propeptide cleavage. Post-translationally, phosphorylated by FAM20C in the extracellular medium.

The protein resides in the secreted. In terms of biological role, may act as a carrier of hyaluronan in serum or as a binding protein between hyaluronan and other matrix protein, including those on cell surfaces in tissues to regulate the localization, synthesis and degradation of hyaluronan which are essential to cells undergoing biological processes. The sequence is that of Inter-alpha-trypsin inhibitor heavy chain H2 (ITIH2) from Sus scrofa (Pig).